Consider the following 420-residue polypeptide: MNYKRIKGTNDIFGEEIWYWRYVEETFRNVCESAGIEEIRTPIFEQTELFVRSVGEESDIVQKEMYTFQDKAGRSITLRPEGTAPVVRAFLENSLIDRGFQQRYYYIGPMFRYEKPQSGRLRQFHQVGFEIIGSESPKADFEVIMLVDTFLRKLGLTKYRIHLNSIGCSACRKNYREALKEYYGQILANLCDDCKRRYETNILRLLDCKVDHEYALNAPKSVDYLCDSCKTHYEKLKEYLNTFEIEYVEDHTLVRGLDYYTRTVFEVRHEGLGAQNTIAGGGRYDGLFVELGGSSVPALGFAGGIERIILALKAEEIEIPIKNVHLVYVVTLGEKAFADGVQLAVELRKKGLSVDVDIMDRKLSGQLKHAHRMGSRYAVIIGDEELEKGIVILRDLETGDQVEVDRDFAVDYIAERVSKD.

The protein belongs to the class-II aminoacyl-tRNA synthetase family. In terms of assembly, homodimer.

The protein resides in the cytoplasm. The enzyme catalyses tRNA(His) + L-histidine + ATP = L-histidyl-tRNA(His) + AMP + diphosphate + H(+). This chain is Histidine--tRNA ligase, found in Thermotoga petrophila (strain ATCC BAA-488 / DSM 13995 / JCM 10881 / RKU-1).